Here is a 395-residue protein sequence, read N- to C-terminus: Succinyl-diaminopimelate desuccinylase 2 (395 aa).

Zn(2+) is bound at residue His-79. Asp-81 is a catalytic residue. Zn(2+) is bound at residue Asp-112. The Proton acceptor role is filled by Glu-145. Residues Glu-146, Glu-174, and His-363 each contribute to the Zn(2+) site.

It belongs to the peptidase M20A family. DapE subfamily. As to quaternary structure, homodimer. The cofactor is Zn(2+). It depends on Co(2+) as a cofactor.

The catalysed reaction is N-succinyl-(2S,6S)-2,6-diaminopimelate + H2O = (2S,6S)-2,6-diaminopimelate + succinate. It participates in amino-acid biosynthesis; L-lysine biosynthesis via DAP pathway; LL-2,6-diaminopimelate from (S)-tetrahydrodipicolinate (succinylase route): step 3/3. Its function is as follows. Catalyzes the hydrolysis of N-succinyl-L,L-diaminopimelic acid (SDAP), forming succinate and LL-2,6-diaminopimelate (DAP), an intermediate involved in the bacterial biosynthesis of lysine and meso-diaminopimelic acid, an essential component of bacterial cell walls. The sequence is that of Succinyl-diaminopimelate desuccinylase 2 from Ruegeria sp. (strain TM1040) (Silicibacter sp.).